The chain runs to 150 residues: Sulfur-rich protein, serovars L1/L3 (150 aa).

Positions 1 to 20 (MSTVPVVQGAGSSNSAQDIS) are disordered. 2 helical membrane-spanning segments follow: residues 43–63 (VGLV…VSAA) and 69–89 (IYLA…ILSM).

It localises to the membrane. The sequence is that of Sulfur-rich protein, serovars L1/L3 (srp) from Chlamydia trachomatis.